Consider the following 224-residue polypeptide: Putative adhesin A1G_07050 (224 aa).

The N-terminal stretch at 1–22 (MKKLLLIAATSATILSSSVSFA) is a signal peptide.

This chain is Putative adhesin A1G_07050, found in Rickettsia rickettsii (strain Sheila Smith).